The chain runs to 72 residues: Translational regulator CsrA (72 aa).

It belongs to the CsrA/RsmA family. In terms of assembly, homodimer; the beta-strands of each monomer intercalate to form a hydrophobic core, while the alpha-helices form wings that extend away from the core.

The protein localises to the cytoplasm. Its function is as follows. A translational regulator that binds mRNA to regulate translation initiation and/or mRNA stability. Usually binds in the 5'-UTR at or near the Shine-Dalgarno sequence preventing ribosome-binding, thus repressing translation. Its main target seems to be the major flagellin gene, while its function is anatagonized by FliW. This is Translational regulator CsrA from Clostridium botulinum (strain 657 / Type Ba4).